The primary structure comprises 745 residues: 5-methyltetrahydropteroyltriglutamate--homocysteine methyltransferase (745 aa).

2 residues coordinate 5-methyltetrahydropteroyltri-L-glutamate: lysine 19 and asparagine 115. L-homocysteine contacts are provided by residues 420–422 (IGS) and glutamate 473. Residues 420-422 (IGS) and glutamate 473 contribute to the L-methionine site. Residues aspartate 478, tyrosine 501, 504–505 (RA), and tryptophan 550 contribute to the 5-methyltetrahydropteroyltri-L-glutamate site. Residue aspartate 588 participates in L-homocysteine binding. Aspartate 588 contacts L-methionine. Histidine 630, cysteine 632, and glutamate 654 together coordinate Zn(2+). Histidine 683 (proton donor) is an active-site residue. Cysteine 715 lines the Zn(2+) pocket.

Belongs to the vitamin-B12 independent methionine synthase family. It depends on Zn(2+) as a cofactor.

The catalysed reaction is 5-methyltetrahydropteroyltri-L-glutamate + L-homocysteine = tetrahydropteroyltri-L-glutamate + L-methionine. It participates in amino-acid biosynthesis; L-methionine biosynthesis via de novo pathway; L-methionine from L-homocysteine (MetE route): step 1/1. In terms of biological role, catalyzes the transfer of a methyl group from 5-methyltetrahydrofolate to homocysteine resulting in methionine formation. The polypeptide is 5-methyltetrahydropteroyltriglutamate--homocysteine methyltransferase (Streptococcus mutans serotype c (strain ATCC 700610 / UA159)).